Reading from the N-terminus, the 295-residue chain is MDKRRNLLNISDLTIGDVENITKLANQYLEEKVENSHVLKNKIVINLFFEDSTRTLASFEIAAKSLGANVITLPIKSSSINKGEDLKDMIKTLNAMNPDYMIIRHKSSGIINTLAKHVNCSLINAGDGSSEHPTQALADYLVIISHKKQIKNLKIVICGDILHSRVARSNIRLLKMFGAKISLVAPPALMCKHFSEVDSLHYSLTEGIKDADVIMLLRLQKERMNNNSSEKEYFHLYGLDAQKLSHAKPDAIVMHPGPINRGIEISNDIADCVILQQVKFGLATRKAVLHYLINV.

Carbamoyl phosphate contacts are provided by Arg54 and Thr55. L-aspartate is bound at residue Lys82. Carbamoyl phosphate-binding residues include Arg104, His132, and Gln135. Residues Arg165 and Arg218 each contribute to the L-aspartate site. The carbamoyl phosphate site is built by Gly257 and Pro258.

This sequence belongs to the aspartate/ornithine carbamoyltransferase superfamily. ATCase family. In terms of assembly, heterododecamer (2C3:3R2) of six catalytic PyrB chains organized as two trimers (C3), and six regulatory PyrI chains organized as three dimers (R2).

The catalysed reaction is carbamoyl phosphate + L-aspartate = N-carbamoyl-L-aspartate + phosphate + H(+). The protein operates within pyrimidine metabolism; UMP biosynthesis via de novo pathway; (S)-dihydroorotate from bicarbonate: step 2/3. Catalyzes the condensation of carbamoyl phosphate and aspartate to form carbamoyl aspartate and inorganic phosphate, the committed step in the de novo pyrimidine nucleotide biosynthesis pathway. In Wolbachia pipientis subsp. Culex pipiens (strain wPip), this protein is Aspartate carbamoyltransferase catalytic subunit.